Consider the following 164-residue polypeptide: HTH-type transcriptional regulator IscR (164 aa).

Residues R2 to N131 enclose the HTH rrf2-type domain. Residues L28–K51 constitute a DNA-binding region (H-T-H motif). The [2Fe-2S] cluster site is built by C92, C98, and C104.

It depends on [2Fe-2S] cluster as a cofactor.

In terms of biological role, regulates the transcription of several operons and genes involved in the biogenesis of Fe-S clusters and Fe-S-containing proteins. In Pectobacterium atrosepticum (strain SCRI 1043 / ATCC BAA-672) (Erwinia carotovora subsp. atroseptica), this protein is HTH-type transcriptional regulator IscR.